Reading from the N-terminus, the 400-residue chain is MGFITKAIPLALAAASVINGAEILETRAGVQTLADKYIVVMNDGISDKDFDSHRSWVNRNHRRRLIRRGAKAMGGMKHTYNFPTGLKGYSGHFDEQMINEISKRADVKYIERDARVQINAIEQQDNVPSWGLARVGSKEPGGTTYYYDSTAGEGSTAYVIDTGTDIQHEEFEGRATWGANFVDDMDMDCNGHGTHVSGTIGGKTFGVAKKSNVVAVKVLDCSGSGSNSGVIMGMEWATKDAQQKGADKAVANMSLGGAFSQASNDAAAAIAKGGVFLAVAAGNDNVDAADSSPASEPSICTIAASTEQDSKADFSNFGQVVDVYAPGDSITSAKPGGGSQVLSGTSMATPHVAGLGAYLIGLGKGGGPGLCDTIKQMAIDVIQNPGASTTSKLINNGSGM.

Positions 1-20 (MGFITKAIPLALAAASVING) are cleaved as a signal peptide. Positions 21-119 (AEILETRAGV…IERDARVQIN (99 aa)) are excised as a propeptide. One can recognise an Inhibitor I9 domain in the interval 36–118 (KYIVVMNDGI…YIERDARVQI (83 aa)). The Peptidase S8 domain occupies 129-400 (SWGLARVGSK…SKLINNGSGM (272 aa)). Catalysis depends on charge relay system residues Asp161 and His192. Asn252 carries N-linked (GlcNAc...) asparagine glycosylation. Ser346 acts as the Charge relay system in catalysis. A glycan (N-linked (GlcNAc...) asparagine) is linked at Asn396.

It belongs to the peptidase S8 family.

It is found in the secreted. Its function is as follows. Secreted subtilisin-like serine protease with keratinolytic activity that contributes to pathogenicity. This is Subtilisin-like protease 7 (SUB7) from Trichophyton violaceum.